Consider the following 360-residue polypeptide: Phospho-N-acetylmuramoyl-pentapeptide-transferase (360 aa).

Transmembrane regions (helical) follow at residues 26 to 46, 72 to 92, 94 to 114, 132 to 152, 168 to 188, 199 to 219, 236 to 256, 263 to 283, 288 to 308, and 338 to 358; these read AIVS…RLIA, PTMG…LWAY, SNPY…VGFV, WKYF…YITG, VMPQ…VGTG, GLAI…AWAT, AGEL…FLWF, VFMG…IAVL, FLLV…ILQV, and VIVR…ATLK.

This sequence belongs to the glycosyltransferase 4 family. MraY subfamily. Requires Mg(2+) as cofactor.

Its subcellular location is the cell inner membrane. It carries out the reaction UDP-N-acetyl-alpha-D-muramoyl-L-alanyl-gamma-D-glutamyl-meso-2,6-diaminopimeloyl-D-alanyl-D-alanine + di-trans,octa-cis-undecaprenyl phosphate = di-trans,octa-cis-undecaprenyl diphospho-N-acetyl-alpha-D-muramoyl-L-alanyl-D-glutamyl-meso-2,6-diaminopimeloyl-D-alanyl-D-alanine + UMP. It functions in the pathway cell wall biogenesis; peptidoglycan biosynthesis. Catalyzes the initial step of the lipid cycle reactions in the biosynthesis of the cell wall peptidoglycan: transfers peptidoglycan precursor phospho-MurNAc-pentapeptide from UDP-MurNAc-pentapeptide onto the lipid carrier undecaprenyl phosphate, yielding undecaprenyl-pyrophosphoryl-MurNAc-pentapeptide, known as lipid I. In Cronobacter sakazakii (strain ATCC BAA-894) (Enterobacter sakazakii), this protein is Phospho-N-acetylmuramoyl-pentapeptide-transferase.